Reading from the N-terminus, the 603-residue chain is Sorting nexin-41 (603 aa).

Residues 1 to 36 (MNSFRESDEEDNNPFSGTNHLYASGIGAVPEGDDDF) form a disordered region. The region spanning 121–241 (AEGSLGALRI…QKFLNPEYIW (121 aa)) is the PX domain. Positions 159, 161, 185, and 208 each coordinate a 1,2-diacyl-sn-glycero-3-phospho-(1D-myo-inositol-3-phosphate).

Belongs to the sorting nexin family.

The protein localises to the endosome membrane. Its subcellular location is the endomembrane system. Functionally, may be required for cytoplasm to vacuole transport (Cvt) and pexophagy. The chain is Sorting nexin-41 (SNX41) from Eremothecium gossypii (strain ATCC 10895 / CBS 109.51 / FGSC 9923 / NRRL Y-1056) (Yeast).